Reading from the N-terminus, the 108-residue chain is DNA-binding protein HBbu (108 aa).

It belongs to the bacterial histone-like protein family.

In terms of biological role, histone-like DNA-binding protein which is capable of wrapping DNA to stabilize it, and thus to prevent its denaturation under extreme environmental conditions. The protein is DNA-binding protein HBbu (hbb) of Borreliella japonica (Borrelia japonica).